An 815-amino-acid polypeptide reads, in one-letter code: Probable bifunctional folylpolyglutamate synthase/dihydropteroate synthase (815 aa).

Residues 1–416 (MRYDEAANFL…LVAGSLFAVA (416 aa)) form a folylpolyglutamate synthase region. An ATP-binding site is contributed by 47–53 (GSNGKGS). Residues 553 to 803 (TAVMGILNVT…DVPENVAAVR (251 aa)) form the Pterin-binding domain. The segment at 555–815 (VMGILNVTPD…EATRTGADAE (261 aa)) is DHPS. A Mg(2+)-binding site is contributed by N560. Residues T600, D633, N652, D722, K758, and 791–793 (RVH) each bind (7,8-dihydropterin-6-yl)methyl diphosphate.

In the N-terminal section; belongs to the folylpolyglutamate synthase family. It in the C-terminal section; belongs to the DHPS family. Requires Mg(2+) as cofactor.

It catalyses the reaction (6S)-5,6,7,8-tetrahydrofolyl-(gamma-L-Glu)(n) + L-glutamate + ATP = (6S)-5,6,7,8-tetrahydrofolyl-(gamma-L-Glu)(n+1) + ADP + phosphate + H(+). It carries out the reaction (7,8-dihydropterin-6-yl)methyl diphosphate + 4-aminobenzoate = 7,8-dihydropteroate + diphosphate. It participates in cofactor biosynthesis; tetrahydrofolylpolyglutamate biosynthesis. The protein operates within cofactor biosynthesis; tetrahydrofolate biosynthesis; 7,8-dihydrofolate from 2-amino-4-hydroxy-6-hydroxymethyl-7,8-dihydropteridine diphosphate and 4-aminobenzoate: step 1/2. Can complement an H.volcanii mutant strain that is thymidine auxotroph because it lacks the two dihydrofolate reductase genes encoded by hdrA and hdrB. The polypeptide is Probable bifunctional folylpolyglutamate synthase/dihydropteroate synthase (folP) (Halobacterium salinarum (strain ATCC 700922 / JCM 11081 / NRC-1) (Halobacterium halobium)).